The primary structure comprises 319 residues: tRNA-cytidine(32) 2-sulfurtransferase (319 aa).

Positions serine 43 to serine 48 match the PP-loop motif motif. [4Fe-4S] cluster-binding residues include cysteine 118, cysteine 121, and cysteine 209.

The protein belongs to the TtcA family. Homodimer. The cofactor is Mg(2+). It depends on [4Fe-4S] cluster as a cofactor.

It localises to the cytoplasm. The catalysed reaction is cytidine(32) in tRNA + S-sulfanyl-L-cysteinyl-[cysteine desulfurase] + AH2 + ATP = 2-thiocytidine(32) in tRNA + L-cysteinyl-[cysteine desulfurase] + A + AMP + diphosphate + H(+). Its pathway is tRNA modification. Functionally, catalyzes the ATP-dependent 2-thiolation of cytidine in position 32 of tRNA, to form 2-thiocytidine (s(2)C32). The sulfur atoms are provided by the cysteine/cysteine desulfurase (IscS) system. The protein is tRNA-cytidine(32) 2-sulfurtransferase of Neisseria meningitidis serogroup A / serotype 4A (strain DSM 15465 / Z2491).